The primary structure comprises 142 residues: Large ribosomal subunit protein uL11 (142 aa).

It belongs to the universal ribosomal protein uL11 family. Part of the ribosomal stalk of the 50S ribosomal subunit. Interacts with L10 and the large rRNA to form the base of the stalk. L10 forms an elongated spine to which L12 dimers bind in a sequential fashion forming a multimeric L10(L12)X complex. One or more lysine residues are methylated.

Functionally, forms part of the ribosomal stalk which helps the ribosome interact with GTP-bound translation factors. This is Large ribosomal subunit protein uL11 from Mycoplasma mycoides subsp. mycoides SC (strain CCUG 32753 / NCTC 10114 / PG1).